An 86-amino-acid polypeptide reads, in one-letter code: RNA-binding protein Hfq (86 aa).

One can recognise a Sm domain in the interval 10–71 (DLFLNNARKE…VSTIQPGKYI (62 aa)).

The protein belongs to the Hfq family. As to quaternary structure, homohexamer.

Its function is as follows. RNA chaperone that binds small regulatory RNA (sRNAs) and mRNAs to facilitate mRNA translational regulation in response to envelope stress, environmental stress and changes in metabolite concentrations. Also binds with high specificity to tRNAs. The protein is RNA-binding protein Hfq of Clostridioides difficile (strain 630) (Peptoclostridium difficile).